Consider the following 683-residue polypeptide: Probable potassium transport system protein Kup 1 (683 aa).

Helical transmembrane passes span 13–33 (GLLI…LYVM), 55–75 (ISLV…FIAL), 98–118 (WLVL…TLTP), 139–159 (VPVS…LLLF), 168–188 (IIGK…GVIG), 218–238 (AGIF…ALYS), 251–271 (SWPY…VWIL), 296–316 (LAAI…LITG), 345–365 (IYIP…VLFF), 376–396 (GLSI…WLAM), 401–421 (TIWN…FMLA), and 426–446 (FMHG…IMYV).

It belongs to the HAK/KUP transporter (TC 2.A.72) family.

It localises to the cell membrane. The catalysed reaction is K(+)(in) + H(+)(in) = K(+)(out) + H(+)(out). In terms of biological role, transport of potassium into the cell. Likely operates as a K(+):H(+) symporter. This Lactobacillus johnsonii (strain CNCM I-12250 / La1 / NCC 533) protein is Probable potassium transport system protein Kup 1.